Reading from the N-terminus, the 242-residue chain is Proteasome subunit alpha (242 aa).

The protein belongs to the peptidase T1A family. In terms of assembly, the 20S proteasome core is composed of 14 alpha and 14 beta subunits that assemble into four stacked heptameric rings, resulting in a barrel-shaped structure. The two inner rings, each composed of seven catalytic beta subunits, are sandwiched by two outer rings, each composed of seven alpha subunits. The catalytic chamber with the active sites is on the inside of the barrel. Has a gated structure, the ends of the cylinder being occluded by the N-termini of the alpha-subunits. Is capped at one or both ends by the proteasome regulatory ATPase, PAN.

The protein resides in the cytoplasm. Its activity is regulated as follows. The formation of the proteasomal ATPase PAN-20S proteasome complex, via the docking of the C-termini of PAN into the intersubunit pockets in the alpha-rings, triggers opening of the gate for substrate entry. Interconversion between the open-gate and close-gate conformations leads to a dynamic regulation of the 20S proteasome proteolysis activity. Its function is as follows. Component of the proteasome core, a large protease complex with broad specificity involved in protein degradation. The polypeptide is Proteasome subunit alpha (Sulfurisphaera tokodaii (strain DSM 16993 / JCM 10545 / NBRC 100140 / 7) (Sulfolobus tokodaii)).